The following is a 131-amino-acid chain: Protein FON2 SPARE1 (131 aa).

Positions methionine 1–alanine 22 are cleaved as a signal peptide. Positions serine 67 to histidine 131 are disordered. Over residues arginine 76–arginine 97 the composition is skewed to basic residues.

The protein belongs to the CLV3/ESR signal peptide family. Expressed in all aerial apical meristems, including the floral and inflorescence meristems in the reproductive phase and the shoot apical meristem in the vegetative phase. Also detected in the primordia of lateral organs such as the leaf and the floral organs.

It localises to the secreted. In terms of biological role, involved in the maintenance of the floral meristem and of the shoot apical meristem in the vegetative phase. Suppresses the fon2 mutation and acts independently of FON1. In Oryza sativa subsp. japonica, the protein has a single amino acid substitution at the putative processing site of the signal peptide and is inactive. The protein is Protein FON2 SPARE1 (FOS1) of Oryza sativa subsp. indica (Rice).